An 87-amino-acid chain; its full sequence is uncharacterized protein (87 aa).

The segment at 52-87 (KWQPRPDANNSDTTTSTEDSTTDTETEYSTTEDELA) is disordered. The segment covering 71–87 (STTDTETEYSTTEDELA) has biased composition (acidic residues).

This is an uncharacterized protein from Autographa californica nuclear polyhedrosis virus (AcMNPV).